We begin with the raw amino-acid sequence, 225 residues long: Membrane protein (225 aa).

Over 1–20 (MPNETNCTLDFEQSVQLFKE) the chain is Virion surface. A helical transmembrane segment spans residues 21 to 41 (YNLFITAFLLFLTIILQYGYA). Residues 42-51 (TRTKVIYTLK) are Intravirion-facing. The helical transmembrane segment at 52-72 (MIVLWCFWPLNIAVGVISCTY) threads the bilayer. At 73–77 (PPNTG) the chain is on the virion surface side. Residues 78-98 (GLVVAIILTVFACLSFVGYWI) traverse the membrane as a helical segment. At 99 to 225 (QSIRLFKRCR…VATGGSSLYT (127 aa)) the chain is on the intravirion side.

It belongs to the gammacoronaviruses M protein family. In terms of assembly, homomultimer. Interacts with envelope E protein in the budding compartment of the host cell, which is located between endoplasmic reticulum and the Golgi complex. Forms a complex with HE and S proteins. Interacts with nucleocapsid N protein. This interaction probably participates in RNA packaging into the virus.

The protein resides in the virion membrane. It is found in the host Golgi apparatus membrane. Its function is as follows. Component of the viral envelope that plays a central role in virus morphogenesis and assembly via its interactions with other viral proteins. In Avian infectious bronchitis virus (strain Beaudette US) (IBV), this protein is Membrane protein.